Reading from the N-terminus, the 138-residue chain is MVAQRTFVMIKPDGVKRGLIGEIISRFEKRGLKIVSLKMVKMSRDTAEKLYEEHKGKSFFEELVNYVTSGPVVCMVIEGDDVVQVIRRMIGNTDPKEAPPGTIRGDYALSKSENVIHASDSIEKAQREMSLFFDKSDL.

Residues lysine 11, phenylalanine 59, arginine 87, threonine 93, arginine 104, and asparagine 114 each coordinate ATP. Histidine 117 serves as the catalytic Pros-phosphohistidine intermediate.

This sequence belongs to the NDK family. It depends on Mg(2+) as a cofactor.

The protein localises to the cytoplasm. It carries out the reaction a 2'-deoxyribonucleoside 5'-diphosphate + ATP = a 2'-deoxyribonucleoside 5'-triphosphate + ADP. The catalysed reaction is a ribonucleoside 5'-diphosphate + ATP = a ribonucleoside 5'-triphosphate + ADP. Major role in the synthesis of nucleoside triphosphates other than ATP. The ATP gamma phosphate is transferred to the NDP beta phosphate via a ping-pong mechanism, using a phosphorylated active-site intermediate. The protein is Nucleoside diphosphate kinase of Saccharolobus solfataricus (strain ATCC 35092 / DSM 1617 / JCM 11322 / P2) (Sulfolobus solfataricus).